A 198-amino-acid polypeptide reads, in one-letter code: Ribonuclease HII (198 aa).

An RNase H type-2 domain is found at 5 to 195 (LRVAGVDEAG…VKAWLASHQG (191 aa)). A divalent metal cation contacts are provided by Asp11, Glu12, and Asp103.

It belongs to the RNase HII family. Mn(2+) is required as a cofactor. Mg(2+) serves as cofactor.

The protein resides in the cytoplasm. The enzyme catalyses Endonucleolytic cleavage to 5'-phosphomonoester.. Its function is as follows. Endonuclease that specifically degrades the RNA of RNA-DNA hybrids. This chain is Ribonuclease HII, found in Chromobacterium violaceum (strain ATCC 12472 / DSM 30191 / JCM 1249 / CCUG 213 / NBRC 12614 / NCIMB 9131 / NCTC 9757 / MK).